Here is a 352-residue protein sequence, read N- to C-terminus: Phenylalanine--tRNA ligase alpha subunit (352 aa).

E258 is a Mg(2+) binding site.

This sequence belongs to the class-II aminoacyl-tRNA synthetase family. Phe-tRNA synthetase alpha subunit type 1 subfamily. As to quaternary structure, tetramer of two alpha and two beta subunits. Mg(2+) is required as a cofactor.

Its subcellular location is the cytoplasm. The catalysed reaction is tRNA(Phe) + L-phenylalanine + ATP = L-phenylalanyl-tRNA(Phe) + AMP + diphosphate + H(+). In Staphylococcus aureus (strain bovine RF122 / ET3-1), this protein is Phenylalanine--tRNA ligase alpha subunit.